A 212-amino-acid polypeptide reads, in one-letter code: MQLFHLCLIISCSCPTVQASKLCLGWLWGMDIDPYKEFGASVELFSFLASDFFPSVRDLLDTASALYRDALESPEHCTPNHTALRQAILCWGELMTLASWVGNNLEDPAARDLVVNYVNTNMGLKIRQLLWFHISCLTFGRETVLEYLVSFGVWIRTPPAYRPPNAPILSTLPETTVVRRRGRSPRRRTPSPRRRRSQSPRRRRSQSPASQC.

A signal peptide spans 1 to 19 (MQLFHLCLIISCSCPTVQA). Positions 25–27 (GWL) are HBEAG. The segment at 165–212 (NAPILSTLPETTVVRRRGRSPRRRTPSPRRRRSQSPRRRRSQSPASQC) is disordered. The span at 178-205 (VRRRGRSPRRRTPSPRRRRSQSPRRRRS) shows a compositional bias: basic residues. The stretch at 184–190 (SPRRRTP) is one 1; half-length repeat. Positions 184–206 (SPRRRTPSPRRRRSQSPRRRRSQ) are 3 X 8 AA repeats of S-P-R-R-R-R-S-Q. The propeptide occupies 184-212 (SPRRRTPSPRRRRSQSPRRRRSQSPASQC). Repeat copies occupy residues 191–198 (SPRRRRSQ) and 199–206 (SPRRRRSQ).

It belongs to the orthohepadnavirus precore antigen family. Homodimerizes. In terms of processing, phosphorylated. Post-translationally, cleaved by host furin.

Its subcellular location is the secreted. The protein localises to the host nucleus. May regulate immune response to the intracellular capsid in acting as a T-cell tolerogen, by having an immunoregulatory effect which prevents destruction of infected cells by cytotoxic T-cells. This immune regulation may predispose to chronicity during perinatal infections and prevent severe liver injury during adult infections. The protein is External core antigen of Hepatitis B virus genotype F2 subtype adw4q (isolate Senegal/9203) (HBV-F).